We begin with the raw amino-acid sequence, 185 residues long: Large ribosomal subunit protein uL5 (185 aa).

It belongs to the universal ribosomal protein uL5 family. Part of the 50S ribosomal subunit; part of the 5S rRNA/L5/L18/L25 subcomplex. Contacts the 5S rRNA and the P site tRNA. Forms a bridge to the 30S subunit in the 70S ribosome.

In terms of biological role, this is one of the proteins that bind and probably mediate the attachment of the 5S RNA into the large ribosomal subunit, where it forms part of the central protuberance. In the 70S ribosome it contacts protein S13 of the 30S subunit (bridge B1b), connecting the 2 subunits; this bridge is implicated in subunit movement. Contacts the P site tRNA; the 5S rRNA and some of its associated proteins might help stabilize positioning of ribosome-bound tRNAs. This is Large ribosomal subunit protein uL5 from Bradyrhizobium sp. (strain ORS 278).